The sequence spans 358 residues: Fructose-bisphosphate aldolase 3, cytoplasmic (358 aa).

Residue Arg-39 participates in substrate binding. Catalysis depends on Glu-183, which acts as the Proton acceptor. The active-site Schiff-base intermediate with dihydroxyacetone-P is Lys-225. Substrate is bound by residues 266-268 (SGG) and Arg-298.

The protein belongs to the class I fructose-bisphosphate aldolase family. As to quaternary structure, homotetramer.

The protein localises to the cytoplasm. Its subcellular location is the cytosol. It carries out the reaction beta-D-fructose 1,6-bisphosphate = D-glyceraldehyde 3-phosphate + dihydroxyacetone phosphate. It functions in the pathway carbohydrate degradation; glycolysis; D-glyceraldehyde 3-phosphate and glycerone phosphate from D-glucose: step 4/4. In terms of biological role, fructose-bisphosphate aldolase that plays a key role in glycolysis and gluconeogenesis. This is Fructose-bisphosphate aldolase 3, cytoplasmic from Oryza sativa subsp. japonica (Rice).